A 269-amino-acid polypeptide reads, in one-letter code: Integral membrane protein 2C (269 aa).

The residue at position 39 (T39) is a Phosphothreonine. The helical; Signal-anchor for type II membrane protein transmembrane segment at 57–77 threads the bilayer; the sequence is VGGVCYLSMGMVVLLMGLVFA. Residues 138-232 form the BRICHOS domain; sequence FGGGDPADII…LCNGKDTYRL (95 aa). Cysteines 165 and 224 form a disulfide. A glycan (N-linked (GlcNAc...) asparagine) is linked at N171.

Belongs to the ITM2 family. In terms of assembly, interacts with BACE1. Interacts with APP. Interacts with STMN2. Post-translationally, type I membrane-bound, as well as soluble, furin has a pre-eminent role in ITM2C proteolytic processing. PCSK7 and PCSK5 may also be involved although to a lesser extent. The soluble form of PCSK7 is incapable of processing ITM2C. Fails to undergo shedding by ADAM10 and intramembrane cleavage by SPPL2B.

It is found in the lysosome membrane. The protein localises to the cell membrane. Its function is as follows. Negative regulator of amyloid-beta peptide production. May inhibit the processing of APP by blocking its access to alpha- and beta-secretase. Binding to the beta-secretase-cleaved APP C-terminal fragment is negligible, suggesting that ITM2C is a poor gamma-secretase cleavage inhibitor. May play a role in TNF-induced cell death and neuronal differentiation. This chain is Integral membrane protein 2C (Itm2c), found in Mus musculus (Mouse).